Reading from the N-terminus, the 765-residue chain is Zinc metalloproteinase nas-37 (765 aa).

Positions 1-22 (MKSQACLKVCLALIGLVSIVST) are cleaved as a signal peptide. The propeptide occupies 23 to 114 (AYIANDVVSD…SESNSPRSRR (92 aa)). One can recognise a Peptidase M12A domain in the interval 115–308 (QAHPDPRNFW…AKMINTRYCS (194 aa)). N-linked (GlcNAc...) asparagine glycosylation is present at asparagine 126. Cystine bridges form between cysteine 156–cysteine 307, cysteine 177–cysteine 196, cysteine 311–cysteine 331, cysteine 333–cysteine 342, cysteine 350–cysteine 374, and cysteine 400–cysteine 420. Histidine 204 is a binding site for Zn(2+). Residue glutamate 205 is part of the active site. Residues histidine 208 and histidine 214 each coordinate Zn(2+). Positions 303 to 343 (NTRYCSNVCQRSLPCLNEGYTDPNNCGRCRCPSGYGGTYCE) constitute an EGF-like domain. The CUB domain occupies 350–458 (CGGSLTASSS…RGFTLKYRAI (109 aa)). Positions 513-573 (KYSSEELYDP…TRPTPTTTVA (61 aa)) are disordered. 2 stretches are compositionally biased toward low complexity: residues 526 to 545 (LSPSSSSASPALLLPSDASP) and 562 to 573 (ALTRPTPTTTVA). A TSP type-1 domain is found at 576 to 627 (TASWSAWGEWSACSQPCGGCGTKTRVRACYGGNQVCPGSNLDRESCNAHACA). 3 disulfides stabilise this stretch: cysteine 588–cysteine 621, cysteine 592–cysteine 626, and cysteine 604–cysteine 611.

Zn(2+) is required as a cofactor. In terms of tissue distribution, expressed in hypodermal cells. Not expressed in the seam cells in L1 to L3 larvae, but it is present in seam cells of L4 larvae. Also expressed in attachment points of the cuticle at the anterior end of larvae, in the arcade cells in the mouth, the anterior pharynx, the amphid socket cells, and in the rectal epithelial cells at the posterior end of the larvae (at protein level).

The protein resides in the secreted. Its function is as follows. Metalloprotease. Plays an essential role in molting, a process during larval stages in which a new cuticle is formed and the old cuticle is shed. Required during ecdysis, the opening of the cuticle to allow the worm to escape. The protein is Zinc metalloproteinase nas-37 (nas-37) of Caenorhabditis elegans.